Consider the following 421-residue polypeptide: Serine hydroxymethyltransferase (421 aa).

(6S)-5,6,7,8-tetrahydrofolate is bound by residues L118 and G122–L124. K226 bears the N6-(pyridoxal phosphate)lysine mark. E242 contacts (6S)-5,6,7,8-tetrahydrofolate.

It belongs to the SHMT family. As to quaternary structure, homodimer. Requires pyridoxal 5'-phosphate as cofactor.

It localises to the cytoplasm. It catalyses the reaction (6R)-5,10-methylene-5,6,7,8-tetrahydrofolate + glycine + H2O = (6S)-5,6,7,8-tetrahydrofolate + L-serine. Its pathway is one-carbon metabolism; tetrahydrofolate interconversion. The protein operates within amino-acid biosynthesis; glycine biosynthesis; glycine from L-serine: step 1/1. Catalyzes the reversible interconversion of serine and glycine with tetrahydrofolate (THF) serving as the one-carbon carrier. This reaction serves as the major source of one-carbon groups required for the biosynthesis of purines, thymidylate, methionine, and other important biomolecules. Also exhibits THF-independent aldolase activity toward beta-hydroxyamino acids, producing glycine and aldehydes, via a retro-aldol mechanism. This is Serine hydroxymethyltransferase from Mycoplasmopsis synoviae (strain 53) (Mycoplasma synoviae).